We begin with the raw amino-acid sequence, 559 residues long: Polypeptide N-acetylgalactosaminyltransferase 1 (559 aa).

Over 1–8 the chain is Cytoplasmic; the sequence is MRKFAYCK. The chain crosses the membrane as a helical; Signal-anchor for type II membrane protein span at residues 9–28; the sequence is VVLATSLIWVLLDMFLLLYF. Residues 29 to 559 are Lumenal-facing; it reads SECNKCDEKK…LRNVTLPEIF (531 aa). A disordered region spans residues 45–65; sequence GDVLEPVQKPHEGPGEMGKPV. N-linked (GlcNAc...) asparagine glycosylation is present at Asn95. 5 disulfides stabilise this stretch: Cys106–Cys339, Cys330–Cys408, Cys442–Cys459, Cys482–Cys497, and Cys523–Cys540. Residues 115-225 form a catalytic subdomain A region; it reads LPTTSVVIVF…VGWLEPLLAR (111 aa). Substrate contacts are provided by Asp156 and Arg186. Positions 209 and 211 each coordinate Mn(2+). A catalytic subdomain B region spans residues 285-347; it reads PVRTPTMAGG…TCSHVGHVFR (63 aa). Trp316 serves as a coordination point for substrate. His344 lines the Mn(2+) pocket. Positions 347 and 352 each coordinate substrate. The Ricin B-type lectin domain maps to 429–551; it reads FSLGEIRNVE…GSRSQQWLLR (123 aa). A glycan (N-linked (GlcNAc...) asparagine) is linked at Asn552.

This sequence belongs to the glycosyltransferase 2 family. GalNAc-T subfamily. Mn(2+) is required as a cofactor. In terms of tissue distribution, widely expressed. Expressed in all tissues tested.

The protein resides in the golgi apparatus. It is found in the golgi stack membrane. The protein localises to the secreted. It carries out the reaction L-seryl-[protein] + UDP-N-acetyl-alpha-D-galactosamine = a 3-O-[N-acetyl-alpha-D-galactosaminyl]-L-seryl-[protein] + UDP + H(+). The catalysed reaction is L-threonyl-[protein] + UDP-N-acetyl-alpha-D-galactosamine = a 3-O-[N-acetyl-alpha-D-galactosaminyl]-L-threonyl-[protein] + UDP + H(+). It functions in the pathway protein modification; protein glycosylation. Catalyzes the initial reaction in O-linked oligosaccharide biosynthesis, the transfer of an N-acetyl-D-galactosamine residue to a serine or threonine residue on the protein receptor. Has a broad spectrum of substrates such as apomucin-, MUC5AC-, MUC1- and MUC2-derived peptides. The chain is Polypeptide N-acetylgalactosaminyltransferase 1 from Homo sapiens (Human).